The following is a 389-amino-acid chain: S-adenosylmethionine synthase (389 aa).

His-17 contacts ATP. Mg(2+) is bound at residue Asp-19. Residue Glu-45 coordinates K(+). L-methionine contacts are provided by Glu-58 and Gln-101. The segment at 101–111 (QSPDIAQGVTE) is flexible loop. ATP contacts are provided by residues 168-170 (DSK), 234-235 (RF), Asp-243, 249-250 (RK), Ala-266, and Lys-270. Asp-243 provides a ligand contact to L-methionine. Position 274 (Lys-274) interacts with L-methionine.

Belongs to the AdoMet synthase family. In terms of assembly, homotetramer; dimer of dimers. The cofactor is Mg(2+). Requires K(+) as cofactor.

The protein localises to the cytoplasm. It catalyses the reaction L-methionine + ATP + H2O = S-adenosyl-L-methionine + phosphate + diphosphate. It participates in amino-acid biosynthesis; S-adenosyl-L-methionine biosynthesis; S-adenosyl-L-methionine from L-methionine: step 1/1. Functionally, catalyzes the formation of S-adenosylmethionine (AdoMet) from methionine and ATP. The overall synthetic reaction is composed of two sequential steps, AdoMet formation and the subsequent tripolyphosphate hydrolysis which occurs prior to release of AdoMet from the enzyme. This Geotalea uraniireducens (strain Rf4) (Geobacter uraniireducens) protein is S-adenosylmethionine synthase.